We begin with the raw amino-acid sequence, 198 residues long: Recombination protein RecR (198 aa).

The C4-type zinc finger occupies 56–71 (CTECRDFSETKICAIC). The Toprim domain occupies 79-174 (HQLCVVESPP…RPSRLAQGLP (96 aa)).

The protein belongs to the RecR family.

May play a role in DNA repair. It seems to be involved in an RecBC-independent recombinational process of DNA repair. It may act with RecF and RecO. This Xylella fastidiosa (strain 9a5c) protein is Recombination protein RecR.